The following is a 296-amino-acid chain: Glucokinase (296 aa).

Belongs to the ROK (NagC/XylR) family. As to quaternary structure, homodimer. A divalent metal cation serves as cofactor.

The catalysed reaction is D-glucose + ATP = D-glucose 6-phosphate + ADP + H(+). Functionally, catalyzes the phosphorylation of D-glucose to D-glucose 6-phosphate using ATP as the phosphate donor. Has a broad hexose specificity, and in addition to glucose, which shows the highest catalytic efficiency, it can also phosphorylate fructose, mannose, galactose and sorbitol. Can also use CTP, GTP or UTP as phosphoryl donor. The polypeptide is Glucokinase (Pyrobaculum calidifontis (strain DSM 21063 / JCM 11548 / VA1)).